A 400-amino-acid chain; its full sequence is Chalcone synthase 7 (400 aa).

Cys-168 is a catalytic residue.

This sequence belongs to the thiolase-like superfamily. Chalcone/stilbene synthases family.

The enzyme catalyses (E)-4-coumaroyl-CoA + 3 malonyl-CoA + 3 H(+) = 2',4,4',6'-tetrahydroxychalcone + 3 CO2 + 4 CoA. It functions in the pathway secondary metabolite biosynthesis; flavonoid biosynthesis. The primary product of this enzyme is 4,2',4',6'-tetrahydroxychalcone (also termed naringenin-chalcone or chalcone) which can under specific conditions spontaneously isomerize into naringenin. The chain is Chalcone synthase 7 (CHS7) from Sorghum bicolor (Sorghum).